The primary structure comprises 222 residues: Uracil-DNA glycosylase (222 aa).

Residue Asp-61 is the Proton acceptor of the active site.

This sequence belongs to the uracil-DNA glycosylase (UDG) superfamily. UNG family.

The protein resides in the cytoplasm. It carries out the reaction Hydrolyzes single-stranded DNA or mismatched double-stranded DNA and polynucleotides, releasing free uracil.. Its function is as follows. Excises uracil residues from the DNA which can arise as a result of misincorporation of dUMP residues by DNA polymerase or due to deamination of cytosine. The chain is Uracil-DNA glycosylase from Aeromonas hydrophila subsp. hydrophila (strain ATCC 7966 / DSM 30187 / BCRC 13018 / CCUG 14551 / JCM 1027 / KCTC 2358 / NCIMB 9240 / NCTC 8049).